The chain runs to 219 residues: RPA-interacting protein (219 aa).

The residue at position 18 (serine 18) is a Phosphoserine. Lysine 121 participates in a covalent cross-link: Glycyl lysine isopeptide (Lys-Gly) (interchain with G-Cter in SUMO); in isoform 2. The RIP-type zinc finger occupies 137–212 (CPVCTKYNLR…SSLLMSCLAC (76 aa)). The mediates nuclear export stretch occupies residues 164–180 (SSELTEQKLRACLEGSI).

In terms of assembly, interacts with the RPA1 subunit of RPA complex. Post-translationally, sumoylated. Sumoylation is required for localization in the nuclear PML body and transport of RPA complex in PML body. Upon UV irradiation and during S phase, it is desumoylated, releasing RPA complex that is translocated to sites of DNA damage. Sumoylation takes place at different Lys residues. Variant 'Lys-103' adds a sumoylation site and increases total sumoylation levels. In terms of tissue distribution, widely expressed. Expressed in pancreas, kidney, muscle, liver, lung, placenta, brain, heart, leukocytes, colon, intestine, ovary, testis, prostate, thymus and spleen.

The protein localises to the cytoplasm. The protein resides in the nucleus. Its subcellular location is the PML body. Functionally, mediates the import of RPA complex into the nucleus, possibly via some interaction with importin beta. Isoform 2 is sumoylated and mediates the localization of RPA complex into the PML body of the nucleus, thereby participating in RPA function in DNA metabolism. This chain is RPA-interacting protein (RPAIN), found in Homo sapiens (Human).